The primary structure comprises 310 residues: Vomeronasal type-1 receptor 90 (310 aa).

Residues 1 to 20 (MRRISTLYGVVDKQAIFFSE) lie on the Extracellular side of the membrane. The chain crosses the membrane as a helical span at residues 21 to 41 (VVIGISFNSILFLFHIFQFLL). Over 42-46 (ERRLR) the chain is Cytoplasmic. Residues 47–67 (ITDLIISLLALIHLGMLTVMG) form a helical membrane-spanning segment. Residues 68-93 (FRAVDIFASQNVWNDIKCKSLAHLHR) are Extracellular-facing. An intrachain disulfide couples C85 to C172. A helical membrane pass occupies residues 94-114 (LLRGLSLCATCLLSIFQAITL). At 115-135 (SPRSSCLAKFKYKSTQHSLCS) the chain is on the cytoplasmic side. The helical transmembrane segment at 136–156 (LLVLWAFYMSCGTHYSFTIVA) threads the bilayer. The Extracellular portion of the chain corresponds to 157–183 (DYNFSSRSLIFVTESCIILPMDYITRH). N159 carries an N-linked (GlcNAc...) asparagine glycan. Residues 184-204 (LFFILGIFRDVSFIGLMALSS) form a helical membrane-spanning segment. Topologically, residues 205–238 (GYMVALLCRHRKQAQHLHRTSLSPKASPEQRATR) are cytoplasmic. The chain crosses the membrane as a helical span at residues 239–259 (TILLLMSFFVLMYCLDCTISA). Residues 260–271 (SRLMHNGEPIHH) are Extracellular-facing. The helical transmembrane segment at 272–292 (SIQMMVSNSYATLSPLLLIVT) threads the bilayer. Residues 293 to 310 (ENRISRFLKSLLGRTVDA) are Cytoplasmic-facing.

The protein belongs to the G-protein coupled receptor 1 family. As to expression, expressed in 1-4% of neurons of the vomeronasal organ. Only one pheromone receptor gene may be expressed in a particular neuron. Not expressed in the main olfactory epithelium.

Its subcellular location is the cell membrane. Functionally, putative pheromone receptor implicated in the regulation of social as well as reproductive behavior. In Rattus norvegicus (Rat), this protein is Vomeronasal type-1 receptor 90 (Vom1r90).